Here is a 445-residue protein sequence, read N- to C-terminus: tRNA-2-methylthio-N(6)-dimethylallyladenosine synthase (445 aa).

The MTTase N-terminal domain occupies 7 to 121 (KHFYIKSFGC…LPELIEKAAS (115 aa)). Cys16, Cys52, Cys84, Cys156, Cys160, and Cys163 together coordinate [4Fe-4S] cluster. One can recognise a Radical SAM core domain in the interval 142 to 374 (RQVGASAFLT…QALLNQQQFD (233 aa)). Residues 377–438 (QQTIGRKATV…PNSVKGQFLD (62 aa)) enclose the TRAM domain.

It belongs to the methylthiotransferase family. MiaB subfamily. As to quaternary structure, monomer. It depends on [4Fe-4S] cluster as a cofactor.

Its subcellular location is the cytoplasm. It catalyses the reaction N(6)-dimethylallyladenosine(37) in tRNA + (sulfur carrier)-SH + AH2 + 2 S-adenosyl-L-methionine = 2-methylsulfanyl-N(6)-dimethylallyladenosine(37) in tRNA + (sulfur carrier)-H + 5'-deoxyadenosine + L-methionine + A + S-adenosyl-L-homocysteine + 2 H(+). Catalyzes the methylthiolation of N6-(dimethylallyl)adenosine (i(6)A), leading to the formation of 2-methylthio-N6-(dimethylallyl)adenosine (ms(2)i(6)A) at position 37 in tRNAs that read codons beginning with uridine. The protein is tRNA-2-methylthio-N(6)-dimethylallyladenosine synthase of Zymomonas mobilis subsp. mobilis (strain ATCC 31821 / ZM4 / CP4).